The following is a 160-amino-acid chain: Putative antiporter subunit mnhE2 (160 aa).

3 helical membrane passes run 22–42, 55–75, and 100–120; these read HFKF…IYIL, IWVA…SSIS, and SDWS…STVI.

The protein belongs to the CPA3 antiporters (TC 2.A.63) subunit E family. As to quaternary structure, may form a heterooligomeric complex that consists of seven subunits: mnhA2, mnhB2, mnhC2, mnhD2, mnhE2, mnhF2 and mnhG2.

It localises to the cell membrane. In Staphylococcus aureus (strain USA300), this protein is Putative antiporter subunit mnhE2 (mnhE2).